The following is a 497-amino-acid chain: Di-/tripeptide transporter (497 aa).

Helical transmembrane passes span 3 to 23 (AILL…MSQT), 26 to 46 (ASIM…GGWL), 57 to 77 (VFYG…PAGV), 84 to 104 (IALI…MVGG), 119 to 139 (IFVF…PWAA), 155 to 175 (AGFS…VLGG), 199 to 219 (IKWV…MAGV), 227 to 247 (VITL…VMMF), 294 to 314 (FIIL…KVII), 321 to 341 (LVLL…TFVL), 372 to 392 (GIEI…LIIL), and 452 to 472 (IVII…WSYI).

Belongs to the major facilitator superfamily. Proton-dependent oligopeptide transporter (POT/PTR) (TC 2.A.17) family.

It is found in the cell membrane. Proton-dependent uptake of di- or tri-peptides. The chain is Di-/tripeptide transporter (dtpT) from Lactobacillus helveticus (Lactobacillus suntoryeus).